An 81-amino-acid chain; its full sequence is Protein Vpu (81 aa).

Residues 1 to 7 (MQPSQII) are Extracellular-facing. Residues 8 to 28 (AIAALVVAAIIAIVVWTIVFI) traverse the membrane as a helical segment. The Cytoplasmic portion of the chain corresponds to 29-81 (EYRRIKRQRKIDCIIDRIRERAEDSGNESEGDREELSKLVEMGHHAPWDIDDL). Phosphoserine; by host CK2 is present on residues S53 and S57.

Belongs to the HIV-1 VPU protein family. In terms of assembly, homopentamer. Interacts with host CD4 and BRTC; these interactions induce proteasomal degradation of CD4. Interacts with host BST2; this interaction leads to the degradation of host BST2. Interacts with host FBXW11. Interacts with host AP1M1; this interaction plays a role in the mistrafficking and subsequent degradation of host BST2. Interacts with host RANBP2; this interaction allows Vpu to down-regulate host BLM sumoylation. In terms of processing, phosphorylated by host CK2. This phosphorylation is necessary for interaction with human BTRC and degradation of CD4.

It localises to the host membrane. Its activity is regulated as follows. Ion channel activity is inhibited by hexamethylene amiloride in vitro. Its function is as follows. Enhances virion budding by targeting host CD4 and Tetherin/BST2 to proteasome degradation. Degradation of CD4 prevents any unwanted premature interactions between viral Env and its host receptor CD4 in the endoplasmic reticulum. Degradation of antiretroviral protein Tetherin/BST2 is important for virion budding, as BST2 tethers new viral particles to the host cell membrane. Mechanistically, Vpu bridges either CD4 or BST2 to BTRC, a substrate recognition subunit of the Skp1/Cullin/F-box protein E3 ubiquitin ligase, induces their ubiquitination and subsequent proteasomal degradation. The alteration of the E3 ligase specificity by Vpu seems to promote the degradation of host IKBKB, leading to NF-kappa-B down-regulation and subsequent apoptosis. Acts as a viroporin that forms an oligomeric ion channel in membranes. Modulates the host DNA repair mechanisms to promote degradation of nuclear viral cDNA in cells that are already productively infected in order to suppress immune sensing and proviral hyper-integration (superinfection). Manipulates PML-NBs and modulates SUMOylation of host BLM protein thereby enhancing its DNA-end processing activity toward viral unintegrated linear DNA. Also inhibits RAD52-mediated homologous repair of viral cDNA, preventing the generation of dead-end circular forms of single copies of the long terminal repeat and permitting sustained nucleolytic attack. This is Protein Vpu from Homo sapiens (Human).